The primary structure comprises 80 residues: CLAVATA3/ESR (CLE)-related protein 40 (80 aa).

A signal peptide spans 1 to 25 (MAAMKYKGSVFIILVILLLSSSLLA). The interval 45–80 (MKKEKKIDGGTANEVEERQVPTGSDPLHHKHIPFTP) is disordered. Pro-65 bears the Hydroxyproline mark.

The protein belongs to the CLV3/ESR signal peptide family. In terms of tissue distribution, mostly expressed at low levels in stems and apex, and, to a lower extent, in roots, seedlings, leaves, flowers, siliques and pollen.

The protein localises to the secreted. Its subcellular location is the extracellular space. Functionally, extracellular signal peptide secreted by differentiated root cells that regulates root cell fate. Acts with ACR4 as a ligand-receptor pair in a signal transduction pathway, coordinating movement of the root tip and organization of cell divisions in the root meristem. Promotes cell differentiation in the distal root meristem in a dose-dependent manner, especially the transition from columella stem cells (CSC) daughters into columella cells (CCs). Induces ACR4 expression in root quiescent center (QC). Involved in WUX5 QC-specific expression pattern regulation. Regulates the transition of protophloem cells from proliferation to differentiation, thus impinging on postembryonic growth capacity of the root meristem; this signaling pathway requires CRN and CLV2. This Arabidopsis thaliana (Mouse-ear cress) protein is CLAVATA3/ESR (CLE)-related protein 40.